The sequence spans 35 residues: Photosystem II reaction center protein T (35 aa).

Residues 3-23 (ALVYTFLLVGTLGIIFFAIFF) traverse the membrane as a helical segment.

It belongs to the PsbT family. In terms of assembly, PSII is composed of 1 copy each of membrane proteins PsbA, PsbB, PsbC, PsbD, PsbE, PsbF, PsbH, PsbI, PsbJ, PsbK, PsbL, PsbM, PsbT, PsbY, PsbZ, Psb30/Ycf12, at least 3 peripheral proteins of the oxygen-evolving complex and a large number of cofactors. It forms dimeric complexes.

It localises to the plastid. Its subcellular location is the chloroplast thylakoid membrane. Its function is as follows. Found at the monomer-monomer interface of the photosystem II (PS II) dimer, plays a role in assembly and dimerization of PSII. PSII is a light-driven water plastoquinone oxidoreductase, using light energy to abstract electrons from H(2)O, generating a proton gradient subsequently used for ATP formation. This is Photosystem II reaction center protein T from Chaetosphaeridium globosum (Charophycean green alga).